Reading from the N-terminus, the 207-residue chain is LexA repressor (207 aa).

Residues 28–48 (VREIGEAVGLASSSTVHGHLS) constitute a DNA-binding region (H-T-H motif). Residues Ser-130 and Lys-168 each act as for autocatalytic cleavage activity in the active site.

It belongs to the peptidase S24 family. As to quaternary structure, homodimer.

The enzyme catalyses Hydrolysis of Ala-|-Gly bond in repressor LexA.. Functionally, represses a number of genes involved in the response to DNA damage (SOS response), including recA and lexA. In the presence of single-stranded DNA, RecA interacts with LexA causing an autocatalytic cleavage which disrupts the DNA-binding part of LexA, leading to derepression of the SOS regulon and eventually DNA repair. This is LexA repressor from Staphylococcus haemolyticus (strain JCSC1435).